A 320-amino-acid polypeptide reads, in one-letter code: Methionyl-tRNA formyltransferase (320 aa).

Residue 111-114 (SLLP) participates in (6S)-5,6,7,8-tetrahydrofolate binding.

It belongs to the Fmt family.

The enzyme catalyses L-methionyl-tRNA(fMet) + (6R)-10-formyltetrahydrofolate = N-formyl-L-methionyl-tRNA(fMet) + (6S)-5,6,7,8-tetrahydrofolate + H(+). Its function is as follows. Attaches a formyl group to the free amino group of methionyl-tRNA(fMet). The formyl group appears to play a dual role in the initiator identity of N-formylmethionyl-tRNA by promoting its recognition by IF2 and preventing the misappropriation of this tRNA by the elongation apparatus. In Pediococcus pentosaceus (strain ATCC 25745 / CCUG 21536 / LMG 10740 / 183-1w), this protein is Methionyl-tRNA formyltransferase.